We begin with the raw amino-acid sequence, 456 residues long: MFS-type transporter SLC18B1 (456 aa).

Position 1 is an N-acetylmethionine (Met1). Residues 1-24 are disordered; the sequence is MEALGDLEGPRAPGGDDPAGSAGE. The Cytoplasmic portion of the chain corresponds to 1–33; sequence MEALGDLEGPRAPGGDDPAGSAGETPGWLSREQ. The segment covering 10–23 has biased composition (low complexity); that stretch reads PRAPGGDDPAGSAG. Ser21 is subject to Phosphoserine. A helical transmembrane segment spans residues 34–54; it reads VFVLISAASVNLGSMMCYSIL. Residues 55–70 are Extracellular-facing; it reads GPFFPKEAEKKGASNT. A helical membrane pass occupies residues 71–91; sequence IIGMIFGCFALFELLASLVFG. The Cytoplasmic segment spans residues 92-100; sequence NYLVHIGAK. The chain crosses the membrane as a helical span at residues 101 to 121; that stretch reads FMFVAGMFVSGGVTILFGVLD. Residues 122–127 lie on the Extracellular side of the membrane; the sequence is RVPDGP. The chain crosses the membrane as a helical span at residues 128–148; it reads VFIAMCFLVRVMDAVSFAAAM. Over 149–161 the chain is Cytoplasmic; the sequence is TASSSILAKAFPN. Residues 162–184 traverse the membrane as a helical segment; that stretch reads NVATVLGSLETFSGLGLILGPPV. At 185-195 the chain is on the extracellular side; sequence GGFLYQSFGYE. A helical membrane pass occupies residues 196-216; that stretch reads VPFIVLGCVVLLMVPLNMYIL. Over 217-230 the chain is Cytoplasmic; that stretch reads PNYESDPGEHSFWK. A helical transmembrane segment spans residues 231 to 251; the sequence is LIALPKVGLIAFVINSLSSCF. The Extracellular portion of the chain corresponds to 252 to 272; the sequence is GFLDPTLSLFVLEKFNLPAGY. Residues 273–293 traverse the membrane as a helical segment; sequence VGLVFLGMALSYAISSPLFGL. Over 294 to 304 the chain is Cytoplasmic; that stretch reads LSDKRPPLRKW. The chain crosses the membrane as a helical span at residues 305–325; sequence LLVFGNLITAGCYMLLGPVPI. The Extracellular portion of the chain corresponds to 326–331; sequence LHIKSQ. The helical transmembrane segment at 332–352 threads the bilayer; the sequence is LWLLVLILVVSGLSAGMSIIP. Topologically, residues 353-377 are cytoplasmic; that stretch reads TFPEILSCAHENGFEEGLSTLGLVS. The helical transmembrane segment at 378-398 threads the bilayer; that stretch reads GLFSAMWSIGAFMGPTLGGFL. Over 399–407 the chain is Extracellular; sequence YEKIGFEWA. A helical transmembrane segment spans residues 408–428; it reads AAIQGLWALISGLAMGLFYLL. The Cytoplasmic segment spans residues 429–456; that stretch reads EYSRRKRSKSQNILSTEEERTTLLPNET. The residue at position 438 (Ser438) is a Phosphoserine.

Belongs to the major facilitator superfamily. In terms of tissue distribution, expressed in various tissues including lung, placenta, adrenal gland, liver, testis, and brain.

The protein resides in the cytoplasmic vesicle. It is found in the secretory vesicle membrane. It localises to the secretory vesicle. The protein localises to the synaptic vesicle membrane. It catalyses the reaction spermine(in) + n H(+)(out) = spermine(out) + n H(+)(in). The enzyme catalyses spermidine(in) + n H(+)(out) = spermidine(out) + n H(+)(in). The catalysed reaction is serotonin(in) + n H(+)(out) = serotonin(out) + n H(+)(in). In terms of biological role, proton-coupled polyamine antiporter involved in the translocation of polyamines from cytosol into secretory vesicles prior to their release via exocytosis. Uses the electrochemical proton gradient generated by a V-type proton-pumping ATPase to couple the efflux of protons with the uptake of a polyamine molecule. Facilitates vesicular storage of spermine and spermidine in astrocytes with an impact on glutamatergic neuronal transmission and memory formation. Upon antigen stimulation, regulates polyamine accumulation and release in mast cell secretory granules, which in turn potentiates mast cell degranulation and histamine secretion. In Homo sapiens (Human), this protein is MFS-type transporter SLC18B1.